We begin with the raw amino-acid sequence, 387 residues long: Phosphoglycerate kinase (387 aa).

Residues 21–23 (DLN), R36, 60–63 (HLGR), R114, and R147 each bind substrate. ATP-binding positions include K198, E313, and 339–342 (GGDT).

Belongs to the phosphoglycerate kinase family. In terms of assembly, monomer.

The protein localises to the cytoplasm. It carries out the reaction (2R)-3-phosphoglycerate + ATP = (2R)-3-phospho-glyceroyl phosphate + ADP. It functions in the pathway carbohydrate degradation; glycolysis; pyruvate from D-glyceraldehyde 3-phosphate: step 2/5. This chain is Phosphoglycerate kinase, found in Baumannia cicadellinicola subsp. Homalodisca coagulata.